The chain runs to 307 residues: Glycine--tRNA ligase alpha subunit (307 aa).

Belongs to the class-II aminoacyl-tRNA synthetase family. Tetramer of two alpha and two beta subunits.

The protein resides in the cytoplasm. The enzyme catalyses tRNA(Gly) + glycine + ATP = glycyl-tRNA(Gly) + AMP + diphosphate. The polypeptide is Glycine--tRNA ligase alpha subunit (Aeromonas salmonicida (strain A449)).